We begin with the raw amino-acid sequence, 325 residues long: Lipoyl synthase (325 aa).

Residues C71, C76, C82, C97, C101, C104, and S311 each contribute to the [4Fe-4S] cluster site. A Radical SAM core domain is found at 83 to 300; it reads FSGGTATFMI…ERQALAMGFT (218 aa).

The protein belongs to the radical SAM superfamily. Lipoyl synthase family. The cofactor is [4Fe-4S] cluster.

The protein resides in the cytoplasm. It catalyses the reaction [[Fe-S] cluster scaffold protein carrying a second [4Fe-4S](2+) cluster] + N(6)-octanoyl-L-lysyl-[protein] + 2 oxidized [2Fe-2S]-[ferredoxin] + 2 S-adenosyl-L-methionine + 4 H(+) = [[Fe-S] cluster scaffold protein] + N(6)-[(R)-dihydrolipoyl]-L-lysyl-[protein] + 4 Fe(3+) + 2 hydrogen sulfide + 2 5'-deoxyadenosine + 2 L-methionine + 2 reduced [2Fe-2S]-[ferredoxin]. It functions in the pathway protein modification; protein lipoylation via endogenous pathway; protein N(6)-(lipoyl)lysine from octanoyl-[acyl-carrier-protein]: step 2/2. In terms of biological role, catalyzes the radical-mediated insertion of two sulfur atoms into the C-6 and C-8 positions of the octanoyl moiety bound to the lipoyl domains of lipoate-dependent enzymes, thereby converting the octanoylated domains into lipoylated derivatives. This is Lipoyl synthase from Methylobacillus flagellatus (strain ATCC 51484 / DSM 6875 / VKM B-1610 / KT).